The chain runs to 299 residues: uncharacterized protein (299 aa).

The chain crosses the membrane as a helical span at residues 25–45 (LLYFFKSLAMILFFIFFSLTS).

The protein resides in the membrane. This is an uncharacterized protein from Rickettsia prowazekii (strain Madrid E).